The primary structure comprises 467 residues: Glycosyl hydrolase family 109 protein (467 aa).

A signal peptide (tat-type signal) is located at residues 1-31 (MKNFNRRAFLKAAGATTAGLVTSGLILPASA). NAD(+) is bound by residues 66–67 (QR), Asp-88, 137–140 (WQWH), 157–158 (EV), and Asn-186. Substrate contacts are provided by residues Tyr-215, Arg-234, 246-249 (YPTH), and Tyr-328. Tyr-246 lines the NAD(+) pocket.

This sequence belongs to the Gfo/Idh/MocA family. Glycosyl hydrolase 109 subfamily. Requires NAD(+) as cofactor. Predicted to be exported by the Tat system. The position of the signal peptide cleavage has not been experimentally proven.

Its function is as follows. Glycosidase. This chain is Glycosyl hydrolase family 109 protein, found in Shewanella woodyi (strain ATCC 51908 / MS32).